The chain runs to 445 residues: Methionine aminopeptidase 2 (445 aa).

Positions Met-1 to Arg-80 are disordered. Over residues Ala-57–Thr-71 the composition is skewed to basic residues. His-195 is a binding site for substrate. A divalent metal cation contacts are provided by Asp-215, Asp-226, and His-295. His-303 is a binding site for substrate. A divalent metal cation contacts are provided by Glu-331 and Glu-426.

Belongs to the peptidase M24A family. Methionine aminopeptidase eukaryotic type 2 subfamily. Co(2+) is required as a cofactor. Requires Zn(2+) as cofactor. Mn(2+) serves as cofactor. The cofactor is Fe(2+).

It localises to the cytoplasm. The enzyme catalyses Release of N-terminal amino acids, preferentially methionine, from peptides and arylamides.. Its function is as follows. Cotranslationally removes the N-terminal methionine from nascent proteins. The N-terminal methionine is often cleaved when the second residue in the primary sequence is small and uncharged (Met-Ala-, Cys, Gly, Pro, Ser, Thr, or Val). The chain is Methionine aminopeptidase 2 from Paracoccidioides brasiliensis (strain Pb18).